We begin with the raw amino-acid sequence, 665 residues long: MSMDSVISSRSGADYRSFRQITRDRLLFEMLRSTKKSSKSAWKVLIMDKLTVKIMSFSCKMADVMEEGVSLVEDLYMRRQPLPLMDAIYFIQPTKENIRIFMSDMSGKIPLYKKAYVFFSSPVQRELVAQIKKDSNVRARIGALSEMNLEYFAIDSQGFTTDHDKALEELFSENAEGSLKYNSCLNMMATRIATVFASMREFPRVHYRVARTIDASTLTTLRDLAPTKLAAGVWNCLARFKAMIPEFPQTETCELLIVDRSIDQIAPIIHEWTYDAMCHDLLCMDGNKYVQQVPSKSGSGTENKEVLLEDHDPIWLELRHVHIANASERLHEKMTNFVSKNKAAQLHQARNGGDLSTKELQKMVQALPQYSDQIDKLALHVEIAGKLNSTIKEQQLKDVGQLEQDLVFGDAGTKELINFFRTHLDISRENKLRLLMVYAAINPDKTRSDKGAKLMQLAGLSADDMIAVSNMRCLCGHDSKKSSAGGFTLKFDLRKKRHGIRKERIGEESKWMLSRFYPILEELIEKLSKGELPKDEYHYLNDPSPSFRGIPSASTQTSPAHQPAQSMRSRRTGGTWARPRDSDDGYSSDSVLKHTSSNSRKLGQRLFVFVIGGATRSELCAAHKLSSKLKREIILGSSSLDDPPQFITKLKMLSTDDLTLDDLQI.

The interval 543 to 594 (PSPSFRGIPSASTQTSPAHQPAQSMRSRRTGGTWARPRDSDDGYSSDSVLKH) is disordered. Composition is skewed to polar residues over residues 552 to 567 (SAST…AQSM) and 585 to 594 (GYSSDSVLKH).

Belongs to the STXBP/unc-18/SEC1 family.

In terms of biological role, involved in the vesicle trafficking. Binds syntaxins. The polypeptide is Probable protein transport Sec1a (Oryza sativa subsp. japonica (Rice)).